A 72-amino-acid polypeptide reads, in one-letter code: Translation initiation factor IF-1 (72 aa).

Residues 1–72 (MTKEDCIEMQ…SKGRIIFRSR (72 aa)) enclose the S1-like domain.

It belongs to the IF-1 family. As to quaternary structure, component of the 30S ribosomal translation pre-initiation complex which assembles on the 30S ribosome in the order IF-2 and IF-3, IF-1 and N-formylmethionyl-tRNA(fMet); mRNA recruitment can occur at any time during PIC assembly.

It is found in the cytoplasm. Its function is as follows. One of the essential components for the initiation of protein synthesis. Stabilizes the binding of IF-2 and IF-3 on the 30S subunit to which N-formylmethionyl-tRNA(fMet) subsequently binds. Helps modulate mRNA selection, yielding the 30S pre-initiation complex (PIC). Upon addition of the 50S ribosomal subunit IF-1, IF-2 and IF-3 are released leaving the mature 70S translation initiation complex. This chain is Translation initiation factor IF-1, found in Buchnera aphidicola subsp. Baizongia pistaciae (strain Bp).